Reading from the N-terminus, the 149-residue chain is D-aminoacyl-tRNA deacylase (149 aa).

Positions 137 to 138 (GP) match the Gly-cisPro motif, important for rejection of L-amino acids motif.

The protein belongs to the DTD family. As to quaternary structure, homodimer.

It is found in the cytoplasm. It carries out the reaction glycyl-tRNA(Ala) + H2O = tRNA(Ala) + glycine + H(+). The catalysed reaction is a D-aminoacyl-tRNA + H2O = a tRNA + a D-alpha-amino acid + H(+). In terms of biological role, an aminoacyl-tRNA editing enzyme that deacylates mischarged D-aminoacyl-tRNAs. Also deacylates mischarged glycyl-tRNA(Ala), protecting cells against glycine mischarging by AlaRS. Acts via tRNA-based rather than protein-based catalysis; rejects L-amino acids rather than detecting D-amino acids in the active site. By recycling D-aminoacyl-tRNA to D-amino acids and free tRNA molecules, this enzyme counteracts the toxicity associated with the formation of D-aminoacyl-tRNA entities in vivo and helps enforce protein L-homochirality. The protein is D-aminoacyl-tRNA deacylase of Desulforudis audaxviator (strain MP104C).